Consider the following 591-residue polypeptide: Complement component C8 beta chain (591 aa).

The first 32 residues, 1–32, serve as a signal peptide directing secretion; the sequence is MKNSRTWAWRAPVELFLLCAALGCLSLPGSRG. Positions 33–54 are excised as a propeptide; sequence ERPHSFGSNAVNKSFAKSRQMR. The TSP type-1 1 domain occupies 64–117; that stretch reads DCELSSWSSWTTCDPCQKKRYRYAYLLQPSQFHGEPCNFSDKEVEDCVTNRPCG. Cystine bridges form between Cys65–Cys100, Cys76–Cys110, Cys79–Cys116, Cys122–Cys133, Cys127–Cys146, Cys140–Cys155, and Cys162–Cys200. 2 C-linked (Man) tryptophan glycosylation sites follow: Trp70 and Trp73. The N-linked (GlcNAc...) asparagine glycan is linked to Asn101. Positions 120-157 constitute an LDL-receptor class A domain; sequence VRCEGFVCAQTGRCVNRRLLCNGDNDCGDQSDEANCRR. The Ca(2+) site is built by Leu138, Asn141, Asp143, Asp145, Asp151, and Glu152. One can recognise an MACPF domain in the interval 158–504; sequence IYKKCQHEMD…EFQKEVSSCH (347 aa). An N-linked (GlcNAc...) asparagine glycan is attached at Asn243. Transmembrane regions (beta stranded) follow at residues 252 to 259, 262 to 269, 379 to 386, and 392 to 399; these read SGFSFGFK, GIFELGIS, AKNDFKIG, and VYVSLGVS. Cys378 and Cys403 are oxidised to a cystine. Position 418 is a phosphothreonine (Thr418). 4 disulfides stabilise this stretch: Cys503–Cys550, Cys505–Cys521, Cys508–Cys523, and Cys525–Cys534. The EGF-like domain maps to 505–535; that stretch reads CAPCQGNGVPVLKGSRCDCICPVGSQGLACE. The TSP type-1 2 domain occupies 545 to 591; the sequence is DGKWNCWSNWSSCSGRRKTRQRQCNNPPPQNGGSPCSGPASETLDCS. 2 C-linked (Man) tryptophan glycosylation sites follow: Trp551 and Trp554. The cysteines at positions 557 and 590 are disulfide-linked. A disordered region spans residues 568 to 591; the sequence is CNNPPPQNGGSPCSGPASETLDCS.

It belongs to the complement C6/C7/C8/C9 family. Heterotrimer of 3 chains: alpha (C8A), beta (C8B) and gamma (C8G); the alpha and gamma chains are disulfide bonded. Component of the membrane attack complex (MAC), composed of complement C5b, C6, C7, C8A, C8B, C8G and multiple copies of the pore-forming subunit C9. Post-translationally, N-glycosylated; contains one or two bound glycans. Not O-glycosylated.

The protein resides in the secreted. It is found in the target cell membrane. Membrane attack complex (MAC) assembly is inhibited by CD59, thereby protecting self-cells from damage during complement activation. CD59 acts by binding to the beta-haipins of C8 (C8A and C8B), forming an intermolecular beta-sheet that prevents incorporation of the multiple copies of C9 required for complete formation of the osmolytic pore. MAC assembly is also inhibited by clusterin (CLU) chaperones that inhibit polymerization of C9. Component of the membrane attack complex (MAC), a multiprotein complex activated by the complement cascade, which inserts into a target cell membrane and forms a pore, leading to target cell membrane rupture and cell lysis. The MAC is initiated by proteolytic cleavage of C5 into complement C5b in response to the classical, alternative, lectin and GZMK complement pathways. The complement pathways consist in a cascade of proteins that leads to phagocytosis and breakdown of pathogens and signaling that strengthens the adaptive immune system. C8B, together with C8A and C8G, inserts into the target membrane, but does not form pores by itself. During MAC assembly, associates with C5b, C6 and C7 to form the C5b8 intermediate complex that inserts into the target membrane and traverses the bilayer increasing membrane rigidity. The polypeptide is Complement component C8 beta chain (Homo sapiens (Human)).